We begin with the raw amino-acid sequence, 210 residues long: Imidazole glycerol phosphate synthase subunit HisH 1 (210 aa).

A Glutamine amidotransferase type-1 domain is found at 3-210 (KIAIVDYGMC…LDNFLSFSNV (208 aa)). The Nucleophile role is filled by cysteine 82. Residues histidine 189 and glutamate 191 contribute to the active site.

As to quaternary structure, heterodimer of HisH and HisF.

The protein localises to the cytoplasm. It catalyses the reaction 5-[(5-phospho-1-deoxy-D-ribulos-1-ylimino)methylamino]-1-(5-phospho-beta-D-ribosyl)imidazole-4-carboxamide + L-glutamine = D-erythro-1-(imidazol-4-yl)glycerol 3-phosphate + 5-amino-1-(5-phospho-beta-D-ribosyl)imidazole-4-carboxamide + L-glutamate + H(+). The enzyme catalyses L-glutamine + H2O = L-glutamate + NH4(+). It functions in the pathway amino-acid biosynthesis; L-histidine biosynthesis; L-histidine from 5-phospho-alpha-D-ribose 1-diphosphate: step 5/9. Functionally, IGPS catalyzes the conversion of PRFAR and glutamine to IGP, AICAR and glutamate. The HisH subunit provides the glutamine amidotransferase activity that produces the ammonia necessary to HisF for the synthesis of IGP and AICAR. The polypeptide is Imidazole glycerol phosphate synthase subunit HisH 1 (hisH1) (Parasynechococcus marenigrum (strain WH8102)).